Reading from the N-terminus, the 554-residue chain is Perforin-1 (554 aa).

The signal sequence occupies residues 1–20 (MATCLFLLGLFLLLPRPVPA). 3 disulfide bridges follow: C22–C75, C30–C72, and C101–C175. The region spanning 26 to 374 (TRSECKQKHK…HYIMSRARWQ (349 aa)) is the MACPF domain. Residues 128–148 (WRVGLDVNPRPEANMRASVAG) traverse the membrane as a beta stranded segment. N-linked (GlcNAc...) asparagine glycosylation is present at N204. 4 disulfides stabilise this stretch: C241-C407, C376-C392, C380-C394, and C396-C406. Residues 256-278 (CLNVEAQVSIGAQASVSSEYKAC) form a beta stranded membrane-spanning segment. A glycan (N-linked (GlcNAc...) asparagine) is linked at N375. An EGF-like domain is found at 375 to 407 (NCSRPCRSGQHKSSHDSCQCECQDSKVTNQDCC). The 119-residue stretch at 395 to 513 (ECQDSKVTNQ…FHEVTCELNH (119 aa)) folds into the C2 domain. Positions 428, 429, 432, 433, 435, 454, 467, 483, 484, 485, 488, 489, 490, and 491 each coordinate Ca(2+). 2 disulfide bridges follow: C496–C509 and C524–C533. An N-linked (GlcNAc...) asparagine glycan is attached at N548.

Belongs to the complement C6/C7/C8/C9 family. As to quaternary structure, monomer, as soluble protein. Homooligomer; homooligomerizes to form a pore-forming ring. It depends on Ca(2+) as a cofactor. N-glycosylated. The glycosylation sites are facing the interior of the pore. Detected in cytotoxic T-lymphocytes and natural killer cells.

The protein resides in the cytolytic granule. It localises to the secreted. It is found in the cell membrane. The protein localises to the endosome lumen. Its function is as follows. Pore-forming protein that plays a key role in granzyme-mediated programmed cell death, and in defense against virus-infected or neoplastic cells. Can insert into the membrane of target cells in its calcium-bound form, oligomerize and form large pores. Promotes cytolysis and apoptosis of target cells by mediating the passage and uptake of cytotoxic granzymes. Facilitates the delivery of cationic cargo protein, while anionic or neural proteins are not delivered efficiently. Perforin pores allow the release of mature caspase-7 (CASP7) into the extracellular milieu. The protein is Perforin-1 (Prf1) of Mus musculus (Mouse).